A 99-amino-acid chain; its full sequence is Integration host factor subunit alpha (99 aa).

The protein belongs to the bacterial histone-like protein family. In terms of assembly, heterodimer of an alpha and a beta chain.

Its function is as follows. This protein is one of the two subunits of integration host factor, a specific DNA-binding protein that functions in genetic recombination as well as in transcriptional and translational control. The sequence is that of Integration host factor subunit alpha from Psychrobacter cryohalolentis (strain ATCC BAA-1226 / DSM 17306 / VKM B-2378 / K5).